The chain runs to 709 residues: Molybdenum cofactor sulfurase (709 aa).

Lys-208 carries the N6-(pyridoxal phosphate)lysine modification. The active site involves Cys-367. An MOSC domain is found at 563–707 (DNALDRQNCR…LESGMSVNFS (145 aa)).

This sequence belongs to the class-V pyridoxal-phosphate-dependent aminotransferase family. MOCOS subfamily. Pyridoxal 5'-phosphate is required as a cofactor.

It catalyses the reaction Mo-molybdopterin + L-cysteine + AH2 = thio-Mo-molybdopterin + L-alanine + A + H2O. It participates in cofactor biosynthesis; molybdopterin biosynthesis. Functionally, sulfurates the molybdenum cofactor. Sulfation of molybdenum is essential for xanthine dehydrogenase (XDH) and aldehyde oxidase (ADO) enzymes in which molybdenum cofactor is liganded by 1 oxygen and 1 sulfur atom in active form. The protein is Molybdenum cofactor sulfurase of Caenorhabditis elegans.